We begin with the raw amino-acid sequence, 190 residues long: FMRFamide-related peptides (190 aa).

An N-terminal signal peptide occupies residues 1 to 21; the sequence is MSCSRTVALLAALWLVVGATS. A propeptide spanning residues 22-33 is cleaved from the precursor; sequence SPVRRSPDLEAR. At F45 the chain carries Phenylalanine amide. The propeptide occupies 69-104; it reads GNSFLRFGRSQPLTLSTDDLVSLLRAYEEDYDTPMT. Position 113 is a phenylalanine amide (F113). A propeptide spanning residues 116–150 is cleaved from the precursor; sequence DPNFIRLGRSADDDKSAFEQNSELVVSGYPQRKSR. The residue at position 158 (L158) is a Leucine amide. The propeptide occupies 160–190; the sequence is RDSEEVNENEFEETEESRRKRSADSCHDCQS. Positions 161–190 are disordered; it reads DSEEVNENEFEETEESRRKRSADSCHDCQS. Acidic residues predominate over residues 164–174; it reads EVNENEFEETE. The segment covering 175–190 has biased composition (basic and acidic residues); it reads ESRRKRSADSCHDCQS.

Belongs to the FARP (FMRFamide related peptide) family. In terms of tissue distribution, RFamide 1: Expressed in corpora cardiaca (CC), corpora allata (CA), antennal lobe (AL) and gnathal ganglion (GNG) (at protein level). Expression in AL detected in most animals, in CC, CA and in GNG in some animals (at protein level). RFamide precursor-related peptide 2: Expressed in corpora cardiaca (CC), corpora allata (CA), antennal lobe (AL) and gnathal ganglion (GNG) (at protein level). Expression in AL detected in some animals, expression in CC, CA and GNG in few animals (at protein level). RFamide 3: Expressed in corpora cardiaca (CC), corpora allata (CA), antennal lobe (AL) and gnathal ganglion (GNG) (at protein level). Expression in AL detected in all animals, in CC, CA and GNG in most animals (at protein level). RFamide 5: Expressed in corpora cardiaca (CC), corpora allata (CA), antennal lobe (AL) and gnathal ganglion (GNG) (at protein level). Expression in AL detected in all animals, in CC, CA and in GNG in some animals (at protein level).

It localises to the secreted. Functionally, in insects, FMRFamide and related peptides have modulatory actions at skeletal neuromuscular junctions, and peptides that are immunologically related to FMRFamide are released into the circulation from neurohemal organs. This chain is FMRFamide-related peptides, found in Agrotis ipsilon (Black cutworm moth).